A 450-amino-acid chain; its full sequence is tRNA modification GTPase MnmE (450 aa).

The (6S)-5-formyl-5,6,7,8-tetrahydrofolate site is built by Arg23, Glu80, and Arg123. In terms of domain architecture, TrmE-type G spans 219–372 (GLHVVLAGKP…LRQRLLQLAG (154 aa)). Residue Asn229 coordinates K(+). Residues 229 to 234 (NVGKSS), 248 to 254 (TPIAGTT), 273 to 276 (DTAG), and 353 to 355 (SAR) contribute to the GTP site. Residue Ser233 coordinates Mg(2+). K(+) is bound by residues Thr248, Ile250, and Thr253. Thr254 is a binding site for Mg(2+). Lys450 serves as a coordination point for (6S)-5-formyl-5,6,7,8-tetrahydrofolate.

The protein belongs to the TRAFAC class TrmE-Era-EngA-EngB-Septin-like GTPase superfamily. TrmE GTPase family. As to quaternary structure, homodimer. Heterotetramer of two MnmE and two MnmG subunits. The cofactor is K(+).

The protein resides in the cytoplasm. In terms of biological role, exhibits a very high intrinsic GTPase hydrolysis rate. Involved in the addition of a carboxymethylaminomethyl (cmnm) group at the wobble position (U34) of certain tRNAs, forming tRNA-cmnm(5)s(2)U34. The protein is tRNA modification GTPase MnmE of Bordetella parapertussis (strain 12822 / ATCC BAA-587 / NCTC 13253).